The primary structure comprises 582 residues: uncharacterized protein (582 aa).

Transmembrane regions (helical) follow at residues Leu29–Leu49, Ile117–Ala137, Val155–Val175, Tyr225–Leu245, Phe254–Ile274, Ala287–Ile307, Tyr329–Val349, Ser376–Ile396, Ile432–Ile452, Leu458–Ser478, Ile491–Phe511, and Ile523–Ile543.

Its subcellular location is the cell membrane. This is an uncharacterized protein from Mycoplasmoides gallisepticum (strain R(low / passage 15 / clone 2)) (Mycoplasma gallisepticum).